The chain runs to 407 residues: Argininosuccinate synthase (407 aa).

ATP-binding positions include 12–20 and Ala39; that span reads AYSGGLDTS. Residues Tyr92 and Ser97 each coordinate L-citrulline. Gly122 provides a ligand contact to ATP. Positions 124, 128, and 129 each coordinate L-aspartate. Asn128 lines the L-citrulline pocket. 5 residues coordinate L-citrulline: Arg132, Ser183, Ser192, Glu268, and Tyr280.

Belongs to the argininosuccinate synthase family. Type 1 subfamily. Homotetramer.

The protein resides in the cytoplasm. It catalyses the reaction L-citrulline + L-aspartate + ATP = 2-(N(omega)-L-arginino)succinate + AMP + diphosphate + H(+). Its pathway is amino-acid biosynthesis; L-arginine biosynthesis; L-arginine from L-ornithine and carbamoyl phosphate: step 2/3. This chain is Argininosuccinate synthase, found in Caulobacter sp. (strain K31).